The following is a 306-amino-acid chain: Aspartate carbamoyltransferase catalytic subunit (306 aa).

Residues arginine 55 and threonine 56 each coordinate carbamoyl phosphate. Residue lysine 84 coordinates L-aspartate. Arginine 105, histidine 133, and glutamine 136 together coordinate carbamoyl phosphate. Positions 166 and 227 each coordinate L-aspartate. 2 residues coordinate carbamoyl phosphate: leucine 265 and proline 266.

The protein belongs to the aspartate/ornithine carbamoyltransferase superfamily. ATCase family. As to quaternary structure, heterododecamer (2C3:3R2) of six catalytic PyrB chains organized as two trimers (C3), and six regulatory PyrI chains organized as three dimers (R2).

The catalysed reaction is carbamoyl phosphate + L-aspartate = N-carbamoyl-L-aspartate + phosphate + H(+). Its pathway is pyrimidine metabolism; UMP biosynthesis via de novo pathway; (S)-dihydroorotate from bicarbonate: step 2/3. Functionally, catalyzes the condensation of carbamoyl phosphate and aspartate to form carbamoyl aspartate and inorganic phosphate, the committed step in the de novo pyrimidine nucleotide biosynthesis pathway. The chain is Aspartate carbamoyltransferase catalytic subunit from Aeromonas salmonicida (strain A449).